A 272-amino-acid chain; its full sequence is Putative phosphoenolpyruvate synthase regulatory protein (272 aa).

152–159 contacts ADP; that stretch reads GVSRSGKT.

Belongs to the pyruvate, phosphate/water dikinase regulatory protein family. PSRP subfamily.

The enzyme catalyses [pyruvate, water dikinase] + ADP = [pyruvate, water dikinase]-phosphate + AMP + H(+). It carries out the reaction [pyruvate, water dikinase]-phosphate + phosphate + H(+) = [pyruvate, water dikinase] + diphosphate. In terms of biological role, bifunctional serine/threonine kinase and phosphorylase involved in the regulation of the phosphoenolpyruvate synthase (PEPS) by catalyzing its phosphorylation/dephosphorylation. The sequence is that of Putative phosphoenolpyruvate synthase regulatory protein from Alcanivorax borkumensis (strain ATCC 700651 / DSM 11573 / NCIMB 13689 / SK2).